The following is a 339-amino-acid chain: Endo-beta-N-acetylglucosaminidase F1 (339 aa).

A signal peptide (or 51, or 52) is located at residues 1 to 50 (MKKFINQFSASLKNNILVFLAFPFVWTSCARDNPLSSENSNISPNAAARA). The GH18 domain occupies 60 to 326 (IKLFSFTEVN…KLIAKELYGD (267 aa)). Residue Glu-182 is the Proton donor of the active site. Trp-339 is a propeptide (removed in mature form).

Belongs to the glycosyl hydrolase 18 family. In terms of assembly, monomer.

Its subcellular location is the secreted. It carries out the reaction an N(4)-(oligosaccharide-(1-&gt;3)-[oligosaccharide-(1-&gt;6)]-beta-D-Man-(1-&gt;4)-beta-D-GlcNAc-(1-&gt;4)-alpha-D-GlcNAc)-L-asparaginyl-[protein] + H2O = an oligosaccharide-(1-&gt;3)-[oligosaccharide-(1-&gt;6)]-beta-D-Man-(1-&gt;4)-D-GlcNAc + N(4)-(N-acetyl-beta-D-glucosaminyl)-L-asparaginyl-[protein]. In terms of biological role, endohydrolysis of the di-N-acetylchitobiosyl unit in high-mannose glycopeptides and glycoproteins. Does not hydrolyze complex bi- or triantennary glycans. The presence of a core-bound fucose impedes endo F1 hydrolysis. This is Endo-beta-N-acetylglucosaminidase F1 (endOF1) from Elizabethkingia meningoseptica (Chryseobacterium meningosepticum).